Consider the following 154-residue polypeptide: Ribonuclease H (154 aa).

The RNase H type-1 domain maps to 1–142 (MTPKLVIYTD…ADELARLGML (142 aa)). Mg(2+)-binding residues include D10, E48, D70, and D134.

Belongs to the RNase H family. Monomer. Requires Mg(2+) as cofactor.

Its subcellular location is the cytoplasm. The catalysed reaction is Endonucleolytic cleavage to 5'-phosphomonoester.. Endonuclease that specifically degrades the RNA of RNA-DNA hybrids. This is Ribonuclease H from Caulobacter sp. (strain K31).